The primary structure comprises 342 residues: KLSDSQTMALFTVFLLFLSSSLALSSPILKEILIEAPSYAPNSFTFDSTNKGFYTSVQDGRVIKYEGPNSGFVDFAYASPYWNKAFCENSTDAEKRPLCGRTYDISYNLQNNQLYIVDCYYHLSVVGSEGGHATQLATSVDGVPFKWLYAVTVDQRTGIVYFTDVSTLYDDRGVQQIMDTSDKTGRLIKYDPSTKETTLLLKELHVPGGAEVSADSSFVLVAEFLSHQIVKYWLEGPKKGTAEVLVKIPNPGNIKRNADGHFWVSSSEELDGNMHGRVDPKGIKFDEFGNILEVIPLPPPFAGEHFEQIQEHDGLLYIGTLFHGSVGILVYDKKGNSFVSSH.

The N-terminal stretch at 1–20 (KLSDSQTMALFTVFLLFLSS) is a signal peptide. The N-linked (GlcNAc...) asparagine glycan is linked to asparagine 89.

This sequence belongs to the strictosidine synthase family. In terms of assembly, monomer.

Its subcellular location is the vacuole. It carries out the reaction 3alpha(S)-strictosidine + H2O = secologanin + tryptamine. It participates in alkaloid biosynthesis; 3alpha(S)-strictosidine biosynthesis; 3alpha(S)-strictosidine from secologanin and tryptamine: step 1/1. Catalyzes the stereospecific condensation of tryptamine with secologanin to form strictosidine, the key intermediate of indole alkaloid biosynthesis. The polypeptide is Strictosidine synthase (STR1) (Rauvolfia mannii).